Reading from the N-terminus, the 684-residue chain is Ubinuclein-1 (684 aa).

5 disordered regions span residues Y108 to D137, Y157 to S287, N311 to K332, M609 to T631, and P660 to S684. Positions S114–D137 are enriched in acidic residues. Basic and acidic residues-rich tracts occupy residues Y157–E167 and S184–T199. The segment covering S211–V235 has biased composition (polar residues). A compositionally biased stretch (basic and acidic residues) spans D238–E260. 4 stretches are compositionally biased toward polar residues: residues T261–L284, N311–A321, D611–T631, and Q669–S684.

The protein belongs to the ubinuclein family. In terms of assembly, component of the HIRA complex made of UBN1, UBN2, ASF1A, CABIN1 and HIRA. Interacts with HIRA.

It is found in the nucleus. It localises to the nucleolus. In terms of biological role, may be required for replication-independent chromatin assembly. This Arabidopsis thaliana (Mouse-ear cress) protein is Ubinuclein-1.